The sequence spans 282 residues: tRNA uridine(34) hydroxylase (282 aa).

One can recognise a Rhodanese domain in the interval 128–222; it reads EGRPVVMLDT…YFEEVGGSHY (95 aa). Cysteine 182 functions as the Cysteine persulfide intermediate in the catalytic mechanism.

This sequence belongs to the TrhO family.

The enzyme catalyses uridine(34) in tRNA + AH2 + O2 = 5-hydroxyuridine(34) in tRNA + A + H2O. In terms of biological role, catalyzes oxygen-dependent 5-hydroxyuridine (ho5U) modification at position 34 in tRNAs. The sequence is that of tRNA uridine(34) hydroxylase from Cupriavidus taiwanensis (strain DSM 17343 / BCRC 17206 / CCUG 44338 / CIP 107171 / LMG 19424 / R1) (Ralstonia taiwanensis (strain LMG 19424)).